The following is a 367-amino-acid chain: Pectate lyase 1 (367 aa).

The signal sequence occupies residues 1 to 21 (MASPCLVAVLVFLCAIVSCYS). Disulfide bonds link Cys-28–Cys-45 and Cys-128–Cys-147. Residue Asn-148 is glycosylated (N-linked (GlcNAc...) asparagine). Residue Asp-170 coordinates Ca(2+). N-linked (GlcNAc...) asparagine glycosylation is present at Asn-178. Asp-194 and Asp-198 together coordinate Ca(2+). Arg-250 is a catalytic residue. Asn-293 carries N-linked (GlcNAc...) asparagine glycosylation. Residues Cys-306 and Cys-312 are joined by a disulfide bond.

It belongs to the polysaccharide lyase 1 family. Amb a subfamily. Requires Ca(2+) as cofactor.

The enzyme catalyses Eliminative cleavage of (1-&gt;4)-alpha-D-galacturonan to give oligosaccharides with 4-deoxy-alpha-D-galact-4-enuronosyl groups at their non-reducing ends.. Its pathway is glycan metabolism; pectin degradation; 2-dehydro-3-deoxy-D-gluconate from pectin: step 2/5. In terms of biological role, has pectate lyase activity. The chain is Pectate lyase 1 from Hesperocyparis arizonica (Arizona cypress).